We begin with the raw amino-acid sequence, 436 residues long: Phosphate-repressible acid phosphatase (436 aa).

The N-terminal stretch at 1–20 (MKGTAASALLIALSATAAQA) is a signal peptide. 3 N-linked (GlcNAc...) asparagine glycosylation sites follow: N227, N283, and N304.

Monomer.

The catalysed reaction is a phosphate monoester + H2O = an alcohol + phosphate. The sequence is that of Phosphate-repressible acid phosphatase (pacA) from Aspergillus niger.